Consider the following 453-residue polypeptide: Allantoinase (453 aa).

Residues His59, His61, Lys146, His186, His242, and Asp315 each coordinate Zn(2+). An N6-carboxylysine modification is found at Lys146.

The protein belongs to the metallo-dependent hydrolases superfamily. Allantoinase family. In terms of assembly, homotetramer. Zn(2+) is required as a cofactor. In terms of processing, carboxylation allows a single lysine to coordinate two zinc ions.

The catalysed reaction is (S)-allantoin + H2O = allantoate + H(+). It participates in nitrogen metabolism; (S)-allantoin degradation; allantoate from (S)-allantoin: step 1/1. In terms of biological role, catalyzes the conversion of allantoin (5-ureidohydantoin) to allantoic acid by hydrolytic cleavage of the five-member hydantoin ring. The chain is Allantoinase from Escherichia coli (strain SMS-3-5 / SECEC).